The chain runs to 126 residues: Protein ApaG (126 aa).

One can recognise an ApaG domain in the interval 2 to 126; sequence SDSRYKVDVS…FRLAVPGSLH (125 aa).

The chain is Protein ApaG from Pseudomonas syringae pv. tomato (strain ATCC BAA-871 / DC3000).